Here is a 465-residue protein sequence, read N- to C-terminus: Probable Xaa-Pro aminopeptidase PEPP (465 aa).

Mn(2+) is bound by residues D259, D270, E395, and E435.

It belongs to the peptidase M24B family. Mn(2+) serves as cofactor.

The enzyme catalyses Release of any N-terminal amino acid, including proline, that is linked to proline, even from a dipeptide or tripeptide.. Catalyzes the removal of a penultimate prolyl residue from the N-termini of peptides. The chain is Probable Xaa-Pro aminopeptidase PEPP (PEPP) from Pyricularia oryzae (strain 70-15 / ATCC MYA-4617 / FGSC 8958) (Rice blast fungus).